Reading from the N-terminus, the 79-residue chain is D-alanyl carrier protein (79 aa).

The Carrier domain maps to 1–77 (MDTKQGVLDI…KIVAKVESLE (77 aa)). Residue serine 35 is modified to O-(pantetheine 4'-phosphoryl)serine.

It belongs to the DltC family. Post-translationally, 4'-phosphopantetheine is transferred from CoA to a specific serine of apo-DCP.

It is found in the cytoplasm. Its pathway is cell wall biogenesis; lipoteichoic acid biosynthesis. Carrier protein involved in the D-alanylation of lipoteichoic acid (LTA). The loading of thioester-linked D-alanine onto DltC is catalyzed by D-alanine--D-alanyl carrier protein ligase DltA. The DltC-carried D-alanyl group is further transferred to cell membrane phosphatidylglycerol (PG) by forming an ester bond, probably catalyzed by DltD. D-alanylation of LTA plays an important role in modulating the properties of the cell wall in Gram-positive bacteria, influencing the net charge of the cell wall. The polypeptide is D-alanyl carrier protein (Lactobacillus acidophilus (strain ATCC 700396 / NCK56 / N2 / NCFM)).